A 455-amino-acid chain; its full sequence is Bifunctional protein GlmU (455 aa).

Residues M1–R228 are pyrophosphorylase. Residues L8–G11, K22, Q73, and G78–T79 each bind UDP-N-acetyl-alpha-D-glucosamine. D103 contacts Mg(2+). UDP-N-acetyl-alpha-D-glucosamine-binding residues include G140, E154, N169, and N226. N226 serves as a coordination point for Mg(2+). Positions V229 to N249 are linker. The tract at residues G250–K455 is N-acetyltransferase. Positions 331 and 349 each coordinate UDP-N-acetyl-alpha-D-glucosamine. H361 functions as the Proton acceptor in the catalytic mechanism. Residues Y364 and N375 each coordinate UDP-N-acetyl-alpha-D-glucosamine. Residues N384 to Y385, A421, and R438 each bind acetyl-CoA.

It in the N-terminal section; belongs to the N-acetylglucosamine-1-phosphate uridyltransferase family. This sequence in the C-terminal section; belongs to the transferase hexapeptide repeat family. As to quaternary structure, homotrimer. Mg(2+) serves as cofactor.

It localises to the cytoplasm. The enzyme catalyses alpha-D-glucosamine 1-phosphate + acetyl-CoA = N-acetyl-alpha-D-glucosamine 1-phosphate + CoA + H(+). It catalyses the reaction N-acetyl-alpha-D-glucosamine 1-phosphate + UTP + H(+) = UDP-N-acetyl-alpha-D-glucosamine + diphosphate. It functions in the pathway nucleotide-sugar biosynthesis; UDP-N-acetyl-alpha-D-glucosamine biosynthesis; N-acetyl-alpha-D-glucosamine 1-phosphate from alpha-D-glucosamine 6-phosphate (route II): step 2/2. The protein operates within nucleotide-sugar biosynthesis; UDP-N-acetyl-alpha-D-glucosamine biosynthesis; UDP-N-acetyl-alpha-D-glucosamine from N-acetyl-alpha-D-glucosamine 1-phosphate: step 1/1. It participates in bacterial outer membrane biogenesis; LPS lipid A biosynthesis. Catalyzes the last two sequential reactions in the de novo biosynthetic pathway for UDP-N-acetylglucosamine (UDP-GlcNAc). The C-terminal domain catalyzes the transfer of acetyl group from acetyl coenzyme A to glucosamine-1-phosphate (GlcN-1-P) to produce N-acetylglucosamine-1-phosphate (GlcNAc-1-P), which is converted into UDP-GlcNAc by the transfer of uridine 5-monophosphate (from uridine 5-triphosphate), a reaction catalyzed by the N-terminal domain. This is Bifunctional protein GlmU from Clostridium beijerinckii (strain ATCC 51743 / NCIMB 8052) (Clostridium acetobutylicum).